The sequence spans 664 residues: Protein IQ-DOMAIN 28 (664 aa).

A disordered region spans residues 1 to 85; the sequence is MGKTPGKWIK…DESKDNLESR (85 aa). A compositionally biased stretch (low complexity) spans 51 to 64; that stretch reads VDPPVVSSQPVPAS. Residues 76 to 85 are compositionally biased toward basic and acidic residues; the sequence is DESKDNLESR. 3 IQ domains span residues 93–121, 122–140, and 144–170; these read LEQAAIKVQATFRAHQARRAFRTLKGIIR, LQAVIRGHLVRRQAIATYS, and GIVKFQALVRGQKARSSDIAIQFQKKH. The tract at residues 106 to 116 is calmodulin-binding; the sequence is AHQARRAFRTL. 3 disordered regions span residues 244-488, 502-573, and 637-664; these read EIPK…KEKD, DEKS…SGRK, and AKGSMNGDKSFTSSKDITHKSTRTDWKR. A Nuclear localization signal 1 motif is present at residues 251 to 258; it reads KKRNYQAV. The segment covering 305–315 has biased composition (basic and acidic residues); it reads DPLRNESDKAN. Residues 339-353 show a composition bias toward low complexity; that stretch reads SPSLKRSSLSNGSKK. The Nuclear localization signal 2 motif lies at 351 to 358; sequence SKKATLRS. 3 stretches are compositionally biased toward basic and acidic residues: residues 358–367, 427–447, and 502–532; these read SAEKKKKDIP, TEKEKDTADPVQIEPERKVLE, and DEKSPVLDRTEEDELKTAETSDKAEALKCAD. Residues 536-547 are compositionally biased toward polar residues; sequence SSENGNVGSDNT. Basic and acidic residues predominate over residues 652–664; sequence DITHKSTRTDWKR.

The protein belongs to the IQD family. As to quaternary structure, binds to multiple calmodulin (CaM) in the presence of Ca(2+) and CaM-like proteins.

The protein resides in the nucleus. It localises to the cytoplasm. It is found in the cytoskeleton. Functionally, may be involved in cooperative interactions with calmodulins or calmodulin-like proteins. Recruits calmodulin proteins to microtubules, thus being a potential scaffold in cellular signaling and trafficking. May associate with nucleic acids and regulate gene expression at the transcriptional or post-transcriptional level. This Arabidopsis thaliana (Mouse-ear cress) protein is Protein IQ-DOMAIN 28.